The chain runs to 551 residues: Protein GZF3 (551 aa).

The tract at residues 17-43 (DNVFEPKSSENLNSLNQSEEEGHIGRW) is disordered. The GATA-type zinc-finger motif lies at 131 to 155 (CKNCLTSTTPLWRRDEHGAMLCNAC). 3 disordered regions span residues 212–260 (GRKA…SATK), 379–400 (LAPTSSRTTDSNPSEVPNQIRS), and 467–490 (SISNSVSSSDVSGRKFENHPAKDL). Residues 228-239 (SQLLMGTSSTAK) show a composition bias toward polar residues. Residues 244-254 (PKTESKERSDS) show a composition bias toward basic and acidic residues. Over residues 388-400 (DSNPSEVPNQIRS) the composition is skewed to polar residues. A compositionally biased stretch (low complexity) spans 467–477 (SISNSVSSSDV). Positions 478–490 (SGRKFENHPAKDL) are enriched in basic and acidic residues.

It is found in the nucleus. The polypeptide is Protein GZF3 (GZF3) (Saccharomyces cerevisiae (strain ATCC 204508 / S288c) (Baker's yeast)).